The following is a 118-amino-acid chain: Basic phospholipase A2 1 (118 aa).

Cystine bridges form between Cys11–Cys72, Cys26–Cys117, Cys28–Cys44, Cys43–Cys98, Cys50–Cys91, Cys60–Cys84, and Cys78–Cys89. Ca(2+) is bound by residues Tyr27, Gly29, and Gly31. The active site involves His47. A Ca(2+)-binding site is contributed by Asp48. Asp92 is an active-site residue.

The protein belongs to the phospholipase A2 family. Group I subfamily. D49 sub-subfamily. It depends on Ca(2+) as a cofactor. In terms of tissue distribution, expressed by the venom gland.

The protein resides in the secreted. It carries out the reaction a 1,2-diacyl-sn-glycero-3-phosphocholine + H2O = a 1-acyl-sn-glycero-3-phosphocholine + a fatty acid + H(+). Functionally, PLA2 catalyzes the calcium-dependent hydrolysis of the 2-acyl groups in 3-sn-phosphoglycerides. The polypeptide is Basic phospholipase A2 1 (Naja melanoleuca (Forest cobra)).